The sequence spans 481 residues: Zinc metalloproteinase/disintegrin (481 aa).

The first 20 residues, 1 to 20, serve as a signal peptide directing secretion; sequence MIQVLLVTICLAVFPYQGSS. Positions 21–190 are excised as a propeptide; it reads IILESGNVDD…KASQLYLTPE (170 aa). In terms of domain architecture, Peptidase M12B spans 197–392; it reads RYIKLAIVVD…DNPQCILNAP (196 aa). 3 cysteine pairs are disulfide-bonded: Cys-308–Cys-387, Cys-349–Cys-371, and Cys-351–Cys-354. His-333 provides a ligand contact to Zn(2+). Residue Glu-334 is part of the active site. Residues His-337 and His-343 each contribute to the Zn(2+) site. The propeptide occupies 393-408; it reads LRTDTVSTPVSGNEFL. The Disintegrin domain occupies 400 to 481; it reads TPVSGNEFLE…GDCPRNPFHA (82 aa). Intrachain disulfides connect Cys-414–Cys-429, Cys-416–Cys-424, Cys-423–Cys-446, Cys-437–Cys-443, Cys-442–Cys-467, and Cys-455–Cys-474. The short motif at 459–461 is the Cell attachment site element; it reads RGD.

Belongs to the venom metalloproteinase (M12B) family. P-II subfamily. P-IIa sub-subfamily. In terms of assembly, monomer. Zn(2+) is required as a cofactor. In terms of tissue distribution, expressed by the venom gland.

It localises to the secreted. Its function is as follows. Impairs hemostasis in the envenomed animal. In terms of biological role, disintegrin elegantin-2a-f: inhibits platelet aggregation induced by ADP, thrombin, platelet-activating factor and collagen. Acts by inhibiting fibrinogen interaction with platelet receptors GPIIb/GPIIIa (ITGA2B/ITGB3). The polypeptide is Zinc metalloproteinase/disintegrin (Protobothrops elegans (Elegant pitviper)).